The following is a 438-amino-acid chain: 23S rRNA (uracil(1939)-C(5))-methyltransferase RlmD (438 aa).

Residues 9-68 (RRTVNRHIITVTADNLDAQGQGVARHQGKTIFVAGLLPGEQAQVQLTEEKRQFAKAKLVK) form the TRAM domain. 4 residues coordinate [4Fe-4S] cluster: Cys81, Cys87, Cys90, and Cys168. Gln272, Phe301, Asn306, Glu322, Asn349, and Asp370 together coordinate S-adenosyl-L-methionine. The active-site Nucleophile is the Cys396.

This sequence belongs to the class I-like SAM-binding methyltransferase superfamily. RNA M5U methyltransferase family. RlmD subfamily.

It catalyses the reaction uridine(1939) in 23S rRNA + S-adenosyl-L-methionine = 5-methyluridine(1939) in 23S rRNA + S-adenosyl-L-homocysteine + H(+). Functionally, catalyzes the formation of 5-methyl-uridine at position 1939 (m5U1939) in 23S rRNA. In Photorhabdus laumondii subsp. laumondii (strain DSM 15139 / CIP 105565 / TT01) (Photorhabdus luminescens subsp. laumondii), this protein is 23S rRNA (uracil(1939)-C(5))-methyltransferase RlmD.